Reading from the N-terminus, the 449-residue chain is Tubulin beta-5 chain (449 aa).

GTP-binding residues include Q11, E70, S139, G143, T144, G145, N205, and N227. E70 contacts Mg(2+). The segment at 427–449 is disordered; the sequence is QDATADEEGEYDVEEEEEGDYET. The span at 430–449 shows a compositional bias: acidic residues; the sequence is TADEEGEYDVEEEEEGDYET.

This sequence belongs to the tubulin family. Dimer of alpha and beta chains. A typical microtubule is a hollow water-filled tube with an outer diameter of 25 nm and an inner diameter of 15 nM. Alpha-beta heterodimers associate head-to-tail to form protofilaments running lengthwise along the microtubule wall with the beta-tubulin subunit facing the microtubule plus end conferring a structural polarity. Microtubules usually have 13 protofilaments but different protofilament numbers can be found in some organisms and specialized cells. Mg(2+) is required as a cofactor.

It localises to the cytoplasm. The protein localises to the cytoskeleton. In terms of biological role, tubulin is the major constituent of microtubules, a cylinder consisting of laterally associated linear protofilaments composed of alpha- and beta-tubulin heterodimers. Microtubules grow by the addition of GTP-tubulin dimers to the microtubule end, where a stabilizing cap forms. Below the cap, tubulin dimers are in GDP-bound state, owing to GTPase activity of alpha-tubulin. The protein is Tubulin beta-5 chain (TUBB5) of Arabidopsis thaliana (Mouse-ear cress).